Reading from the N-terminus, the 616-residue chain is Zinc metalloproteinase nas-36 (616 aa).

A signal peptide spans 1-21; the sequence is MRRFCRLLFLNSLLSISICKA. Residues 22–125 constitute a propeptide that is removed on maturation; sequence QNPAHLVADE…SKDKTKRLRR (104 aa). A Peptidase M12A domain is found at 126–321; sequence SFVSDKTATW…VATINTAYCK (196 aa). 9 disulfide bridges follow: cysteine 168-cysteine 320, cysteine 191-cysteine 210, cysteine 324-cysteine 345, cysteine 347-cysteine 356, cysteine 367-cysteine 396, cysteine 424-cysteine 444, cysteine 518-cysteine 549, cysteine 522-cysteine 554, and cysteine 534-cysteine 539. Asparagine 173 is a glycosylation site (N-linked (GlcNAc...) asparagine). Histidine 218 contacts Zn(2+). Residue glutamate 219 is part of the active site. Residues histidine 222 and histidine 228 each contribute to the Zn(2+) site. The 42-residue stretch at 316–357 folds into the EGF-like domain; it reads NTAYCKEECKSEKTECEYGGYMRPSKCSECLCPDGLGGEKCE. The region spanning 367–481 is the CUB domain; sequence CGGILELSDE…IGFKIQVRST (115 aa). A TSP type-1 domain is found at 506-555; that stretch reads PNVWADWGEWSMCSRTCGGCGIRSRVRSCRSKKCEGRRQEFGTCNLKACP.

Zn(2+) serves as cofactor.

It is found in the secreted. Functionally, mtalloprotease. Involved in molting, a process during larval stages in which a new cuticle is formed and the old cuticle is shed. The polypeptide is Zinc metalloproteinase nas-36 (Caenorhabditis briggsae).